Reading from the N-terminus, the 1272-residue chain is AF4/FMR2 family member 2 (1272 aa).

2 disordered regions span residues 93–183 (IPKN…LTQD) and 200–223 (PQIG…SSGE). Over residues 97 to 107 (SVPQNPNNKNE) the composition is skewed to polar residues. Over residues 151–160 (SKPEWSRDSH) the composition is skewed to basic and acidic residues. Residues 161 to 183 (NPSTVLASQASGQPNKMQTLTQD) are compositionally biased toward polar residues. Basic and acidic residues predominate over residues 212–223 (AKEDSNPKSSGE). Ser-391 bears the Phosphoserine mark. Disordered stretches follow at residues 418 to 491 (KAKP…KWQL), 535 to 687 (TNAS…DQEE), 779 to 829 (SLHA…PEKK), and 842 to 903 (PPCI…QDKN). Pro residues predominate over residues 426–438 (VNPPLATPQPPPA). Over residues 439-452 (VQASGGSGSSSESE) the composition is skewed to low complexity. Thr-478 is modified (phosphothreonine). Residues 543 to 558 (EPKERPLLSLIREKAR) are compositionally biased toward basic and acidic residues. A compositionally biased stretch (polar residues) spans 576 to 586 (STTSETVSQRT). The span at 616-629 (PKEKESVELHDPPR) shows a compositional bias: basic and acidic residues. The span at 630 to 640 (GRNKATAHKPA) shows a compositional bias: basic residues. Basic and acidic residues predominate over residues 818–829 (PTEVAEKIPEKK). Composition is skewed to pro residues over residues 844 to 853 (CISPAPPHKP) and 874 to 883 (FPPPLSPLPE).

It belongs to the AF4 family.

Its subcellular location is the nucleus speckle. RNA-binding protein. Might be involved in alternative splicing regulation through an interaction with G-quartet RNA structure. This is AF4/FMR2 family member 2 (AFF2) from Pongo pygmaeus (Bornean orangutan).